The primary structure comprises 549 residues: Coiled-coil domain-containing protein 102A (549 aa).

Disordered stretches follow at residues 1–61, 135–195, and 207–248; these read MSHG…TAPA, LAGA…GSQE, and PEEP…EEDA. A phosphoserine mark is found at Ser-12, Ser-26, and Ser-28. Pro residues predominate over residues 37 to 55; that stretch reads SLPPTPPSGTPSPGPPPSL. Positions 69–160 form a coiled coil; it reads ESREELRLRE…ARGRELARLR (92 aa). Composition is skewed to basic and acidic residues over residues 135-158 and 165-187; these read LAGA…ELAR and AADK…DIGA. Coiled coils occupy residues 263–398 and 426–517; these read KVLL…NASA and KLKK…NAPL. Disordered regions lie at residues 472-496 and 509-549; these read ELDE…QSEN and RRQQ…IQVA. Over residues 530 to 549 the composition is skewed to acidic residues; that stretch reads EAGDGASDLDEDEDLQIQVA. Ser-536 is modified (phosphoserine).

This is Coiled-coil domain-containing protein 102A (Ccdc102a) from Mus musculus (Mouse).